Reading from the N-terminus, the 156-residue chain is Small ribosomal subunit protein uS7 (156 aa).

It belongs to the universal ribosomal protein uS7 family. In terms of assembly, part of the 30S ribosomal subunit. Contacts proteins S9 and S11.

Its function is as follows. One of the primary rRNA binding proteins, it binds directly to 16S rRNA where it nucleates assembly of the head domain of the 30S subunit. Is located at the subunit interface close to the decoding center, probably blocks exit of the E-site tRNA. The chain is Small ribosomal subunit protein uS7 from Shewanella sp. (strain ANA-3).